The following is a 555-amino-acid chain: CTP synthase (555 aa).

The segment at 1 to 265 is amidoligase domain; that stretch reads MTRYIFITGG…GNRVCEKLNI (265 aa). Ser-13 serves as a coordination point for CTP. Ser-13 lines the UTP pocket. ATP-binding positions include 14–19 and Asp-71; that span reads SLGKGI. Mg(2+) is bound by residues Asp-71 and Glu-139. CTP contacts are provided by residues 146 to 148, 186 to 191, and Lys-222; these read DIE and KTKPTQ. UTP is bound by residues 186–191 and Lys-222; that span reads KTKPTQ. Residues 290 to 541 form the Glutamine amidotransferase type-1 domain; that stretch reads TVAVVGKYVD…IKAGLAAKEA (252 aa). Gly-351 is a binding site for L-glutamine. Catalysis depends on Cys-378, which acts as the Nucleophile; for glutamine hydrolysis. Residues 379 to 382, Glu-402, and Arg-469 each bind L-glutamine; that span reads LGMQ. Catalysis depends on residues His-514 and Glu-516.

This sequence belongs to the CTP synthase family. In terms of assembly, homotetramer.

The enzyme catalyses UTP + L-glutamine + ATP + H2O = CTP + L-glutamate + ADP + phosphate + 2 H(+). The catalysed reaction is L-glutamine + H2O = L-glutamate + NH4(+). It carries out the reaction UTP + NH4(+) + ATP = CTP + ADP + phosphate + 2 H(+). It participates in pyrimidine metabolism; CTP biosynthesis via de novo pathway; CTP from UDP: step 2/2. Its activity is regulated as follows. Allosterically activated by GTP, when glutamine is the substrate; GTP has no effect on the reaction when ammonia is the substrate. The allosteric effector GTP functions by stabilizing the protein conformation that binds the tetrahedral intermediate(s) formed during glutamine hydrolysis. Inhibited by the product CTP, via allosteric rather than competitive inhibition. In terms of biological role, catalyzes the ATP-dependent amination of UTP to CTP with either L-glutamine or ammonia as the source of nitrogen. Regulates intracellular CTP levels through interactions with the four ribonucleotide triphosphates. In Coxiella burnetii (strain CbuK_Q154) (Coxiella burnetii (strain Q154)), this protein is CTP synthase.